Here is a 173-residue protein sequence, read N- to C-terminus: Crossover junction endodeoxyribonuclease RuvC (173 aa).

Active-site residues include D8, E67, and D139. The Mg(2+) site is built by D8, E67, and D139.

Belongs to the RuvC family. Homodimer which binds Holliday junction (HJ) DNA. The HJ becomes 2-fold symmetrical on binding to RuvC with unstacked arms; it has a different conformation from HJ DNA in complex with RuvA. In the full resolvosome a probable DNA-RuvA(4)-RuvB(12)-RuvC(2) complex forms which resolves the HJ. Mg(2+) is required as a cofactor.

Its subcellular location is the cytoplasm. It catalyses the reaction Endonucleolytic cleavage at a junction such as a reciprocal single-stranded crossover between two homologous DNA duplexes (Holliday junction).. The RuvA-RuvB-RuvC complex processes Holliday junction (HJ) DNA during genetic recombination and DNA repair. Endonuclease that resolves HJ intermediates. Cleaves cruciform DNA by making single-stranded nicks across the HJ at symmetrical positions within the homologous arms, yielding a 5'-phosphate and a 3'-hydroxyl group; requires a central core of homology in the junction. The consensus cleavage sequence is 5'-(A/T)TT(C/G)-3'. Cleavage occurs on the 3'-side of the TT dinucleotide at the point of strand exchange. HJ branch migration catalyzed by RuvA-RuvB allows RuvC to scan DNA until it finds its consensus sequence, where it cleaves and resolves the cruciform DNA. The polypeptide is Crossover junction endodeoxyribonuclease RuvC (Shewanella sediminis (strain HAW-EB3)).